Here is a 617-residue protein sequence, read N- to C-terminus: Proline--tRNA ligase (617 aa).

Belongs to the class-II aminoacyl-tRNA synthetase family. ProS type 1 subfamily. Homodimer.

The protein localises to the cytoplasm. It catalyses the reaction tRNA(Pro) + L-proline + ATP = L-prolyl-tRNA(Pro) + AMP + diphosphate. Catalyzes the attachment of proline to tRNA(Pro) in a two-step reaction: proline is first activated by ATP to form Pro-AMP and then transferred to the acceptor end of tRNA(Pro). As ProRS can inadvertently accommodate and process non-cognate amino acids such as alanine and cysteine, to avoid such errors it has two additional distinct editing activities against alanine. One activity is designated as 'pretransfer' editing and involves the tRNA(Pro)-independent hydrolysis of activated Ala-AMP. The other activity is designated 'posttransfer' editing and involves deacylation of mischarged Ala-tRNA(Pro). The misacylated Cys-tRNA(Pro) is not edited by ProRS. This Streptococcus agalactiae serotype III (strain NEM316) protein is Proline--tRNA ligase.